Consider the following 533-residue polypeptide: NAD(P)H-quinone oxidoreductase chain 4 2 (533 aa).

14 consecutive transmembrane segments (helical) span residues 5–25 (FPWLTVLTLLPLVAAFFIPVL), 33–53 (VRWYALAIALLEFGLSAMVFW), 86–106 (LAVPLILLTGLVNTLAIFAAW), 114–134 (LFYFLMLALYSAQIGVFAAQD), 135–155 (LILFFLIWELELVPVYLLISI), 168–188 (FILYTAVGSLFILIAGLGMAF), 208–228 (ALELLAYAGFLIAFGVKLPIF), 242–262 (SAPVSMVLAGVLLKMGGYGLI), 276–296 (FAPVLIALGVVNIIYGALTAF), 310–330 (ISHMGFVLLGIGALNGIGLNG), 331–351 (AMLQMLSHGLIAAVLFFLAGV), 384–404 (ASLALPGMSGFVSELTVFLGL), 416–436 (VGVIFLAAVGVIITPVYLLSM), and 462–482 (TFIALSLLVPIIAVGMYPKVA).

Belongs to the complex I subunit 4 family.

It is found in the cellular thylakoid membrane. It carries out the reaction a plastoquinone + NADH + (n+1) H(+)(in) = a plastoquinol + NAD(+) + n H(+)(out). The catalysed reaction is a plastoquinone + NADPH + (n+1) H(+)(in) = a plastoquinol + NADP(+) + n H(+)(out). In terms of biological role, NDH-1 shuttles electrons from NAD(P)H, via FMN and iron-sulfur (Fe-S) centers, to quinones in the respiratory chain. The immediate electron acceptor for the enzyme in this species is believed to be plastoquinone. Couples the redox reaction to proton translocation (for every two electrons transferred, four hydrogen ions are translocated across the cytoplasmic membrane), and thus conserves the redox energy in a proton gradient. The polypeptide is NAD(P)H-quinone oxidoreductase chain 4 2 (Thermosynechococcus vestitus (strain NIES-2133 / IAM M-273 / BP-1)).